A 134-amino-acid chain; its full sequence is MAKASNNSAAQRVRKKVKKNVAEGVVHVHASFNNTIITITDRQGNALAWATSGGQGFKGSRKSTPFAAQVAAESAGRVAMEYGVKNLEVRIKGPGPGRESAVRALHGLGIKITAISDVTPVPHNGCRPPKRRRI.

The protein belongs to the universal ribosomal protein uS11 family. Part of the 30S ribosomal subunit. Interacts with proteins S7 and S18. Binds to IF-3.

Located on the platform of the 30S subunit, it bridges several disparate RNA helices of the 16S rRNA. Forms part of the Shine-Dalgarno cleft in the 70S ribosome. In Paraburkholderia xenovorans (strain LB400), this protein is Small ribosomal subunit protein uS11.